We begin with the raw amino-acid sequence, 147 residues long: Peptide deformylase (147 aa).

Positions 88 and 130 each coordinate Fe cation. Glu131 is an active-site residue. A Fe cation-binding site is contributed by His134.

Belongs to the polypeptide deformylase family. Fe(2+) serves as cofactor.

The enzyme catalyses N-terminal N-formyl-L-methionyl-[peptide] + H2O = N-terminal L-methionyl-[peptide] + formate. Functionally, removes the formyl group from the N-terminal Met of newly synthesized proteins. Requires at least a dipeptide for an efficient rate of reaction. N-terminal L-methionine is a prerequisite for activity but the enzyme has broad specificity at other positions. The polypeptide is Peptide deformylase (Clostridium botulinum (strain Alaska E43 / Type E3)).